A 281-amino-acid polypeptide reads, in one-letter code: Spermatogenesis-associated serine-rich protein 1 (281 aa).

Over residues 1–14 (MEAARDAQHSDVLE) the composition is skewed to basic and acidic residues. The segment at 1 to 92 (MEAARDAQHS…SSSAQANRSL (92 aa)) is disordered. A compositionally biased stretch (polar residues) spans 21-37 (SRTSSHQNRRASLSSDG). T53 is modified (phosphothreonine). The segment covering 54–65 (PSDTASGLGQKT) has biased composition (polar residues). Residues 66 to 85 (SSTSSSSSSSSSSSPSSSSS) show a composition bias toward low complexity. Phosphoserine occurs at positions 71, 74, 77, 78, 79, and 91.

Detected in pachytene spermatocytes and round spermatids.

The protein is Spermatogenesis-associated serine-rich protein 1 (Spats1) of Rattus norvegicus (Rat).